The sequence spans 299 residues: MQENTRLRIAIQKSGRLSKESIELLSECGVKMHIHEQSLIAFSTNLPIDILRVRDDDIPGLIFDGVVDLGIIGENVLEENELERQSLGENPSYKLLKKLDFGYCRLSLALPQEKKFQNLKDFEGLRIATSYPQLLKRFMKENGINYKNCMLTGSVEVAPRANLADAICDLVSSGATLQANNLKEVKVIYESRACLIQKENALSKEKQTLVDKIMLRVAGVMQARESKYIMLHAPKEKLDKIQALLPGVERPTILPLAHDEKNVALHMVSKENLFWETMEALKEEGASSILVLPIEKMLK.

It belongs to the ATP phosphoribosyltransferase family. Long subfamily. Mg(2+) serves as cofactor.

Its subcellular location is the cytoplasm. It catalyses the reaction 1-(5-phospho-beta-D-ribosyl)-ATP + diphosphate = 5-phospho-alpha-D-ribose 1-diphosphate + ATP. It participates in amino-acid biosynthesis; L-histidine biosynthesis; L-histidine from 5-phospho-alpha-D-ribose 1-diphosphate: step 1/9. Its activity is regulated as follows. Feedback inhibited by histidine. In terms of biological role, catalyzes the condensation of ATP and 5-phosphoribose 1-diphosphate to form N'-(5'-phosphoribosyl)-ATP (PR-ATP). Has a crucial role in the pathway because the rate of histidine biosynthesis seems to be controlled primarily by regulation of HisG enzymatic activity. The polypeptide is ATP phosphoribosyltransferase (Campylobacter jejuni subsp. jejuni serotype O:23/36 (strain 81-176)).